We begin with the raw amino-acid sequence, 197 residues long: Signal peptidase complex catalytic subunit SEC11 (197 aa).

The Cytoplasmic segment spans residues 1 to 14; that stretch reads MLSSLAPYMANPRQ. Residues 15-33 form a helical; Signal-anchor for type II membrane protein membrane-spanning segment; sequence TLTQVLNFALVLSTAFMLW. At 34–197 the chain is on the lumenal side; the sequence is KGLSVVTNST…MGLMVVLQRE (164 aa). Asn-41 carries an N-linked (GlcNAc...) asparagine glycan. Catalysis depends on charge relay system residues Ser-53 and His-92. Positions 102 to 115 are enriched in basic and acidic residues; sequence PGREDKKSVKKGGE. The disordered stretch occupies residues 102-134; sequence PGREDKKSVKKGGEEGEETSSTPSQKLLTKGDN. Asp-139 acts as the Charge relay system in catalysis. Residues 183–194 are C-terminal short (CTS) helix; the sequence is VLLGFMGLMVVL.

Belongs to the peptidase S26B family. In terms of assembly, component of the signal peptidase complex (SPC) composed of a catalytic subunit SEC11 and three accessory subunits SPC1, SPC2 and SPC3. The complex induces a local thinning of the ER membrane which is used to measure the length of the signal peptide (SP) h-region of protein substrates. This ensures the selectivity of the complex towards h-regions shorter than 18-20 amino acids. SPC associates with the translocon complex.

It is found in the endoplasmic reticulum membrane. It catalyses the reaction Cleavage of hydrophobic, N-terminal signal or leader sequences from secreted and periplasmic proteins.. Catalytic component of the signal peptidase complex (SPC) which catalyzes the cleavage of N-terminal signal sequences from nascent proteins as they are translocated into the lumen of the endoplasmic reticulum. Specifically cleaves N-terminal signal peptides that contain a hydrophobic alpha-helix (h-region) shorter than 18-20 amino acids. This is Signal peptidase complex catalytic subunit SEC11 (SEC11) from Paracoccidioides lutzii (strain ATCC MYA-826 / Pb01) (Paracoccidioides brasiliensis).